We begin with the raw amino-acid sequence, 464 residues long: Arabinose-proton symporter (464 aa).

A run of 12 helical transmembrane segments spans residues 21-43 (GFVI…DTAV), 63-85 (GLVI…FLSD), 92-111 (ILMT…ALSQ), 116-138 (LIIA…VTYI), 150-172 (LSSL…NLAV), 185-207 (GWRW…LLVV), 266-288 (ALVI…ITYY), 303-325 (GFVT…VLLI), 332-354 (KLMS…SFYF), 364-386 (VLIL…IMIS), 398-420 (AGIA…PMMI), and 424-446 (GLAY…VVTI).

It belongs to the major facilitator superfamily. Sugar transporter (TC 2.A.1.1) family.

It localises to the cell membrane. It carries out the reaction L-arabinose(in) + H(+)(in) = L-arabinose(out) + H(+)(out). The enzyme catalyses D-galactose(in) + H(+)(in) = D-galactose(out) + H(+)(out). It catalyses the reaction D-xylose(in) + H(+)(in) = D-xylose(out) + H(+)(out). Functionally, uptake of L-arabinose across the cytoplasmic membrane with the concomitant transport of protons into the cell (symport system). In the presence of inducing amounts of L-arabinose, can import both D-galactose and D-xylose. Can also transport the disaccharide alpha-1,5-arabinobiose. This chain is Arabinose-proton symporter (araE), found in Bacillus subtilis (strain 168).